Reading from the N-terminus, the 52-residue chain is Venom peptide 4a (52 aa).

A signal peptide spans 1–23 (MRSAILLVIVAIVAILGFLGVNA). AXPX repeat units follow at residues 23-26 (AEPL), 31-34 (AEPN), and 39-42 (AAPL). A propeptide spanning residues 24–41 (EPLPSPLAEPNPHAKAAP) is cleaved from the precursor. Ala-51 carries the alanine amide modification.

Expressed by the venom gland.

Its subcellular location is the secreted. The protein is Venom peptide 4a of Eumenes pomiformis (Potter wasp).